We begin with the raw amino-acid sequence, 44 residues long: Antibacterial protein 2 homolog (44 aa).

Belongs to the staphylococcal hemolytic protein family.

It localises to the secreted. Has hemolytic activity and also inhibits the growth of gonococci. This Staphylococcus haemolyticus (strain JCSC1435) protein is Antibacterial protein 2 homolog.